We begin with the raw amino-acid sequence, 264 residues long: MQQYLDLMRHVLEHGHDKADRTGTGTRSVFGYQMRFDLAAGFPLVTTKKCHLRSIIHELLWFLSGDTNIRYLKENGVSIWDEWADENGDLGPVYGYQWRSWPAPDGRHIDQISQLLDMIKKNPDSRRLIVSAWNPALVDQMALPPCHSLFQFYVANGRLSCQLYQRSADIFLGVPFNIASYALLTMMVAQVCGLQPGDFVHTLGDAHLYSNHLEQARLQLTRDPRPLPTMKLNPEVKDLFAFTFDDFALEGYDPHPHIKAQVAV.

Arg21 provides a ligand contact to dUMP. His51 serves as a coordination point for (6R)-5,10-methylene-5,6,7,8-tetrahydrofolate. Residue 126–127 (RR) coordinates dUMP. Residue Cys146 is the Nucleophile of the active site. Residues 166-169 (RSAD), Asn177, and 207-209 (HLY) contribute to the dUMP site. Residue Asp169 coordinates (6R)-5,10-methylene-5,6,7,8-tetrahydrofolate. (6R)-5,10-methylene-5,6,7,8-tetrahydrofolate is bound at residue Ala263.

It belongs to the thymidylate synthase family. Bacterial-type ThyA subfamily. As to quaternary structure, homodimer.

It localises to the cytoplasm. It carries out the reaction dUMP + (6R)-5,10-methylene-5,6,7,8-tetrahydrofolate = 7,8-dihydrofolate + dTMP. It participates in pyrimidine metabolism; dTTP biosynthesis. Catalyzes the reductive methylation of 2'-deoxyuridine-5'-monophosphate (dUMP) to 2'-deoxythymidine-5'-monophosphate (dTMP) while utilizing 5,10-methylenetetrahydrofolate (mTHF) as the methyl donor and reductant in the reaction, yielding dihydrofolate (DHF) as a by-product. This enzymatic reaction provides an intracellular de novo source of dTMP, an essential precursor for DNA biosynthesis. This Chromobacterium violaceum (strain ATCC 12472 / DSM 30191 / JCM 1249 / CCUG 213 / NBRC 12614 / NCIMB 9131 / NCTC 9757 / MK) protein is Thymidylate synthase.